A 195-amino-acid polypeptide reads, in one-letter code: Ribonuclease HII (195 aa).

Residues Ser-6 to Asn-195 form the RNase H type-2 domain. A divalent metal cation-binding residues include Asp-12, Glu-13, and Asp-108.

The protein belongs to the RNase HII family. The cofactor is Mn(2+). Requires Mg(2+) as cofactor.

It is found in the cytoplasm. The enzyme catalyses Endonucleolytic cleavage to 5'-phosphomonoester.. In terms of biological role, endonuclease that specifically degrades the RNA of RNA-DNA hybrids. The sequence is that of Ribonuclease HII from Prochlorococcus marinus (strain NATL2A).